The chain runs to 263 residues: 3-methyl-2-oxobutanoate hydroxymethyltransferase 2 (263 aa).

Mg(2+) contacts are provided by D45 and D84. 3-methyl-2-oxobutanoate is bound by residues 45-46 (DS), D84, and K112. A Mg(2+)-binding site is contributed by E114. Residue E181 is the Proton acceptor of the active site.

Belongs to the PanB family. As to quaternary structure, homodecamer; pentamer of dimers. Requires Mg(2+) as cofactor.

The protein localises to the cytoplasm. The enzyme catalyses 3-methyl-2-oxobutanoate + (6R)-5,10-methylene-5,6,7,8-tetrahydrofolate + H2O = 2-dehydropantoate + (6S)-5,6,7,8-tetrahydrofolate. The protein operates within cofactor biosynthesis; (R)-pantothenate biosynthesis; (R)-pantoate from 3-methyl-2-oxobutanoate: step 1/2. Its function is as follows. Catalyzes the reversible reaction in which hydroxymethyl group from 5,10-methylenetetrahydrofolate is transferred onto alpha-ketoisovalerate to form ketopantoate. This Aliivibrio fischeri (strain ATCC 700601 / ES114) (Vibrio fischeri) protein is 3-methyl-2-oxobutanoate hydroxymethyltransferase 2.